A 121-amino-acid chain; its full sequence is Large ribosomal subunit protein bL19 (121 aa).

This sequence belongs to the bacterial ribosomal protein bL19 family.

This protein is located at the 30S-50S ribosomal subunit interface and may play a role in the structure and function of the aminoacyl-tRNA binding site. The chain is Large ribosomal subunit protein bL19 (rplS) from Borreliella burgdorferi (strain ATCC 35210 / DSM 4680 / CIP 102532 / B31) (Borrelia burgdorferi).